A 127-amino-acid chain; its full sequence is Aspartate 1-decarboxylase (127 aa).

Residue serine 25 is the Schiff-base intermediate with substrate; via pyruvic acid of the active site. Residue serine 25 is modified to Pyruvic acid (Ser). A substrate-binding site is contributed by threonine 57. Residue tyrosine 58 is the Proton donor of the active site. 73-75 (GAA) serves as a coordination point for substrate.

The protein belongs to the PanD family. Heterooctamer of four alpha and four beta subunits. It depends on pyruvate as a cofactor. In terms of processing, is synthesized initially as an inactive proenzyme, which is activated by self-cleavage at a specific serine bond to produce a beta-subunit with a hydroxyl group at its C-terminus and an alpha-subunit with a pyruvoyl group at its N-terminus.

The protein localises to the cytoplasm. It catalyses the reaction L-aspartate + H(+) = beta-alanine + CO2. It participates in cofactor biosynthesis; (R)-pantothenate biosynthesis; beta-alanine from L-aspartate: step 1/1. Functionally, catalyzes the pyruvoyl-dependent decarboxylation of aspartate to produce beta-alanine. This Exiguobacterium sibiricum (strain DSM 17290 / CCUG 55495 / CIP 109462 / JCM 13490 / 255-15) protein is Aspartate 1-decarboxylase.